A 275-amino-acid chain; its full sequence is MSVVINNVNAVIKSLVNKKMMNEWTVLRRGEPDKFFHRFNPTLDLNVIDRDVHAEILDKFKVDIGFGLEKHLQRTNGSGMSLSNRIMKALNKIGALSRINASEILRNYNKGYDLYGRLMPKLSFDQMIADLWENQRRLLALGARLAKGLDKQMIFKTNNTEDLKCFKFSTRGDDYYIRARSTDYVNMGHHLCLAFEVLKEAGTLEYSSGAKCPIGSNCILIYRPNESSSTKLPTKPVPVRSNEKHSEQIDYFNKQIEELIFLFNNMMMKFSDYLD.

This is an uncharacterized protein from Enterobacteria phage T4 (Bacteriophage T4).